Reading from the N-terminus, the 299-residue chain is Nucleotide-binding protein glr4163 (299 aa).

18–25 (SPAGAGRT) is an ATP binding site.

The protein belongs to the RapZ-like family.

Displays ATPase and GTPase activities. The polypeptide is Nucleotide-binding protein glr4163 (Gloeobacter violaceus (strain ATCC 29082 / PCC 7421)).